Here is a 209-residue protein sequence, read N- to C-terminus: ATP-dependent Clp protease proteolytic subunit (209 aa).

Serine 106 (nucleophile) is an active-site residue. Histidine 131 is a catalytic residue.

Belongs to the peptidase S14 family. In terms of assembly, fourteen ClpP subunits assemble into 2 heptameric rings which stack back to back to give a disk-like structure with a central cavity, resembling the structure of eukaryotic proteasomes.

The protein localises to the cytoplasm. It catalyses the reaction Hydrolysis of proteins to small peptides in the presence of ATP and magnesium. alpha-casein is the usual test substrate. In the absence of ATP, only oligopeptides shorter than five residues are hydrolyzed (such as succinyl-Leu-Tyr-|-NHMec, and Leu-Tyr-Leu-|-Tyr-Trp, in which cleavage of the -Tyr-|-Leu- and -Tyr-|-Trp bonds also occurs).. Functionally, cleaves peptides in various proteins in a process that requires ATP hydrolysis. Has a chymotrypsin-like activity. Plays a major role in the degradation of misfolded proteins. The sequence is that of ATP-dependent Clp protease proteolytic subunit from Caulobacter vibrioides (strain ATCC 19089 / CIP 103742 / CB 15) (Caulobacter crescentus).